Consider the following 229-residue polypeptide: Prolactin (229 aa).

Residues 1–30 (MDSKGSSQKGSRLLLLLVVSNLLLCQGVVS) form the signal peptide. An intrachain disulfide couples C34 to C41. 3 positions are modified to phosphoserine: S56, S64, and S120. Disulfide bonds link C88-C204 and C221-C229.

The protein belongs to the somatotropin/prolactin family. In terms of assembly, interacts with PRLR.

The protein localises to the secreted. Its function is as follows. Prolactin acts primarily on the mammary gland by promoting lactation. The protein is Prolactin (PRL) of Bos taurus (Bovine).